We begin with the raw amino-acid sequence, 447 residues long: Na(+)-translocating NADH-quinone reductase subunit A (447 aa).

Belongs to the NqrA family. Composed of six subunits; NqrA, NqrB, NqrC, NqrD, NqrE and NqrF.

It carries out the reaction a ubiquinone + n Na(+)(in) + NADH + H(+) = a ubiquinol + n Na(+)(out) + NAD(+). Its function is as follows. NQR complex catalyzes the reduction of ubiquinone-1 to ubiquinol by two successive reactions, coupled with the transport of Na(+) ions from the cytoplasm to the periplasm. NqrA to NqrE are probably involved in the second step, the conversion of ubisemiquinone to ubiquinol. This is Na(+)-translocating NADH-quinone reductase subunit A from Klebsiella pneumoniae subsp. pneumoniae (strain ATCC 700721 / MGH 78578).